The chain runs to 184 residues: MKNITDSFVSVGHWPSAGSFEFNTDILATNPINLSVVLGVLIFFGKGVLNDLLDKRKQRILSTIRNSEELRRGAIEQLERARVRLRKVEIEADEYRTNGYYEIEREKGNLINATCNSLERLENYKNETLFFEKQRAINKVRQEVLQQALQRALGTLNSCLNIEVHFRTISANIDILGSMEEITD.

A helical membrane pass occupies residues 27–49 (LATNPINLSVVLGVLIFFGKGVL).

Belongs to the ATPase B chain family. As to quaternary structure, F-type ATPases have 2 components, F(1) - the catalytic core - and F(0) - the membrane proton channel. F(1) has five subunits: alpha(3), beta(3), gamma(1), delta(1), epsilon(1). F(0) has four main subunits: a(1), b(1), b'(1) and c(10-14). The alpha and beta chains form an alternating ring which encloses part of the gamma chain. F(1) is attached to F(0) by a central stalk formed by the gamma and epsilon chains, while a peripheral stalk is formed by the delta, b and b' chains.

Its subcellular location is the plastid. The protein resides in the chloroplast thylakoid membrane. In terms of biological role, f(1)F(0) ATP synthase produces ATP from ADP in the presence of a proton or sodium gradient. F-type ATPases consist of two structural domains, F(1) containing the extramembraneous catalytic core and F(0) containing the membrane proton channel, linked together by a central stalk and a peripheral stalk. During catalysis, ATP synthesis in the catalytic domain of F(1) is coupled via a rotary mechanism of the central stalk subunits to proton translocation. Its function is as follows. Component of the F(0) channel, it forms part of the peripheral stalk, linking F(1) to F(0). The sequence is that of ATP synthase subunit b, chloroplastic from Phalaenopsis aphrodite subsp. formosana (Moth orchid).